The sequence spans 228 residues: MLYGFSGVILQGAIVTLELALSSVVLAVLIGLVGAGAKLSQNRVTGLIFEGYTTLIRGVPDLVLMLLIFYGLQIALNVVTDSLGIDQIDIDPMVAGIITLGFIYGAYFTETFRGAFMAVPKGHIEAATAFGFTHGQTFRRIMFPAMMRYALPGIGNNWQVILKATALVSLLGLEDVVKATQLAGKSTWEPFYFAVVCGLIYLVFTTVSNGVLLLLERRYSVGVKRADL.

Topologically, residues 1–12 (MLYGFSGVILQG) are periplasmic. The helical transmembrane segment at 13–33 (AIVTLELALSSVVLAVLIGLV) threads the bilayer. The ABC transmembrane type-1 domain occupies 13 to 212 (AIVTLELALS…VFTTVSNGVL (200 aa)). Residues 34–58 (GAGAKLSQNRVTGLIFEGYTTLIRG) lie on the Cytoplasmic side of the membrane. Residues 59–79 (VPDLVLMLLIFYGLQIALNVV) traverse the membrane as a helical segment. Over 80 to 87 (TDSLGIDQ) the chain is Periplasmic. The chain crosses the membrane as a helical span at residues 88-108 (IDIDPMVAGIITLGFIYGAYF). Residues 109-152 (TETFRGAFMAVPKGHIEAATAFGFTHGQTFRRIMFPAMMRYALP) lie on the Cytoplasmic side of the membrane. Residues 153–173 (GIGNNWQVILKATALVSLLGL) form a helical membrane-spanning segment. Residues 174 to 194 (EDVVKATQLAGKSTWEPFYFA) are Periplasmic-facing. Residues 195–215 (VVCGLIYLVFTTVSNGVLLLL) form a helical membrane-spanning segment. Residues 216–228 (ERRYSVGVKRADL) are Cytoplasmic-facing.

Belongs to the binding-protein-dependent transport system permease family. HisMQ subfamily. The HisPMQJ complex is composed of two ATP-binding proteins (HisP), two transmembrane proteins (HisM and HisQ) and a solute-binding protein (HisJ). The HisPMQ-ArgT complex is composed of two ATP-binding proteins (HisP), two transmembrane proteins (HisM and HisQ) and a solute-binding protein (ArgT).

The protein resides in the cell inner membrane. Its function is as follows. Part of the ABC transporter complex HisPMQJ involved in histidine transport. Is also part of the ABC transporter complex HisPMQ-ArgT involved in lysine/arginine/ornithine transport. Probably responsible for the translocation of the substrate across the membrane. The polypeptide is Histidine/lysine/arginine/ornithine transport system permease protein HisQ (hisQ) (Salmonella typhi).